A 415-amino-acid polypeptide reads, in one-letter code: Histidine--tRNA ligase (415 aa).

This sequence belongs to the class-II aminoacyl-tRNA synthetase family. In terms of assembly, homodimer.

The protein resides in the cytoplasm. It carries out the reaction tRNA(His) + L-histidine + ATP = L-histidyl-tRNA(His) + AMP + diphosphate + H(+). The sequence is that of Histidine--tRNA ligase from Rickettsia akari (strain Hartford).